Reading from the N-terminus, the 420-residue chain is UDP-N-acetylglucosamine 1-carboxyvinyltransferase (420 aa).

A phosphoenolpyruvate-binding site is contributed by lysine 22–asparagine 23. Residue arginine 94 participates in UDP-N-acetyl-alpha-D-glucosamine binding. Residue cysteine 118 is the Proton donor of the active site. The residue at position 118 (cysteine 118) is a 2-(S-cysteinyl)pyruvic acid O-phosphothioketal. The UDP-N-acetyl-alpha-D-glucosamine site is built by aspartate 306 and isoleucine 328.

This sequence belongs to the EPSP synthase family. MurA subfamily.

Its subcellular location is the cytoplasm. The enzyme catalyses phosphoenolpyruvate + UDP-N-acetyl-alpha-D-glucosamine = UDP-N-acetyl-3-O-(1-carboxyvinyl)-alpha-D-glucosamine + phosphate. Its pathway is cell wall biogenesis; peptidoglycan biosynthesis. Functionally, cell wall formation. Adds enolpyruvyl to UDP-N-acetylglucosamine. This chain is UDP-N-acetylglucosamine 1-carboxyvinyltransferase, found in Jannaschia sp. (strain CCS1).